Reading from the N-terminus, the 433-residue chain is GPI mannosyltransferase 2 (433 aa).

9 helical membrane-spanning segments follow: residues 4–24 (LVKP…IISL), 109–129 (TAVI…FYLT), 148–165 (ATFT…GFFT), 172–194 (LSFL…IIPY), 204–226 (FYYT…NCIL), 247–267 (ALLF…RQQF), 322–342 (IPNF…TFYF), 354–374 (LIFI…VQII), and 410–430 (GYIY…VFFL).

The protein belongs to the PIGV family.

It is found in the endoplasmic reticulum membrane. It functions in the pathway glycolipid biosynthesis; glycosylphosphatidylinositol-anchor biosynthesis. In terms of biological role, mannosyltransferase involved in glycosylphosphatidylinositol-anchor biosynthesis. Transfers the second mannose to the glycosylphosphatidylinositol during GPI precursor assembly. The sequence is that of GPI mannosyltransferase 2 (GPI18) from Candida glabrata (strain ATCC 2001 / BCRC 20586 / JCM 3761 / NBRC 0622 / NRRL Y-65 / CBS 138) (Yeast).